Consider the following 111-residue polypeptide: Prothymosin alpha (111 aa).

At Met1 the chain carries N-acetylmethionine. Residues 1-111 form a disordered region; sequence MSDAAVDTSS…TKKQKTDEDD (111 aa). At Ser2 the chain carries N-acetylserine; in Prothymosin alpha, N-terminally processed. The residue at position 2 (Ser2) is a Phosphoserine. A Phosphothreonine modification is found at Thr8. Residues Ser9 and Ser10 each carry the phosphoserine modification. A phosphothreonine mark is found at Thr13 and Thr14. Residues 13 to 31 show a composition bias toward basic and acidic residues; sequence TTKDLKEKKEVVEEAENGR. At Lys15 the chain carries N6-acetyllysine; alternate. Residue Lys15 is modified to N6-succinyllysine; alternate. Positions 40–84 are enriched in acidic residues; sequence ENEENGEQEADNEVDEEEEEGGEEEEEEEEGDGEEEDGDEDEEAE. The span at 101 to 111 shows a compositional bias: basic and acidic residues; that stretch reads DTKKQKTDEDD. Thr102 carries the post-translational modification Phosphothreonine. N6-acetyllysine; alternate is present on Lys103. Lys103 is covalently cross-linked (Glycyl lysine isopeptide (Lys-Gly) (interchain with G-Cter in SUMO2); alternate). Position 107 is a phosphothreonine (Thr107).

It belongs to the pro/parathymosin family. Interacts with NUPR1; regulates apoptotic process. Covalently linked to a small RNA of about 20 nucleotides.

It is found in the nucleus. In terms of biological role, prothymosin alpha may mediate immune function by conferring resistance to certain opportunistic infections. The chain is Prothymosin alpha (PTMA) from Homo sapiens (Human).